A 612-amino-acid polypeptide reads, in one-letter code: Threonine--tRNA ligase (612 aa).

The segment at 218-509 (DHRKLGVELG…LSEHFGGNFP (292 aa)) is catalytic. Residues Cys-310, His-361, and His-486 each coordinate Zn(2+).

It belongs to the class-II aminoacyl-tRNA synthetase family. Homodimer. Zn(2+) is required as a cofactor.

Its subcellular location is the cytoplasm. It carries out the reaction tRNA(Thr) + L-threonine + ATP = L-threonyl-tRNA(Thr) + AMP + diphosphate + H(+). Catalyzes the attachment of threonine to tRNA(Thr) in a two-step reaction: L-threonine is first activated by ATP to form Thr-AMP and then transferred to the acceptor end of tRNA(Thr). Also edits incorrectly charged L-seryl-tRNA(Thr). The polypeptide is Threonine--tRNA ligase (Helicobacter pylori (strain ATCC 700392 / 26695) (Campylobacter pylori)).